The chain runs to 317 residues: Ribosomal protein L11 methyltransferase (317 aa).

Residues Thr158, Gly179, Asp201, and Asn244 each contribute to the S-adenosyl-L-methionine site.

It belongs to the methyltransferase superfamily. PrmA family.

The protein localises to the cytoplasm. The catalysed reaction is L-lysyl-[protein] + 3 S-adenosyl-L-methionine = N(6),N(6),N(6)-trimethyl-L-lysyl-[protein] + 3 S-adenosyl-L-homocysteine + 3 H(+). Its function is as follows. Methylates ribosomal protein L11. The protein is Ribosomal protein L11 methyltransferase of Streptococcus pyogenes serotype M5 (strain Manfredo).